Consider the following 92-residue polypeptide: Plasmid copy control protein CopR (92 aa).

Basic and acidic residues predominate over residues 1-27 (MELAFRESLKKMRGTKSKEKFSQELEM). 2 disordered regions span residues 1 to 40 (MELA…SGKS) and 63 to 92 (IPNE…NDFV). Residues 9–62 (LKKMRGTKSKEKFSQELEMSRSNYSRIESGKSDPTIKTLEQIVKLTNSTLVVDL) form the HTH cro/C1-type domain. Residues 20–39 (KFSQELEMSRSNYSRIESGK) constitute a DNA-binding region (H-T-H motif).

Functionally, involved in copy control of plasmid pIP501. This chain is Plasmid copy control protein CopR (copR), found in Streptococcus agalactiae.